The following is a 326-amino-acid chain: MESEEVDNKFTWVIKNFSTLQYDKIYSDPFVIGGCKWHLLAYPKGNKFNNSLSLYLVVDDARALPCGWRRYAQFSLTIINQLTDKLSQRGEKQNWFNQRNLGSGFTSMIPLPNLHAKNAGYLVNGEVKIVVEINDLEVIGKLDVSEESEETNQPLKKIKLDDNDAVSFDSLNETSPVKESIDVNGFQVLPSQVESVKCIFERHPDFASKFRPKNRHLKSTYMTVLLGLIKTLCQLPEELTDDDLDEASVAVSYVENGGLRLDWLEKKLAEVKAKKKKVETGKARLQRAEEELQKLNQKCLELKAFLEKENADVSEANVPLSFEDVV.

One can recognise an MATH domain in the interval 7–133 (DNKFTWVIKN…NGEVKIVVEI (127 aa)). The stretch at 259–312 (LRLDWLEKKLAEVKAKKKKVETGKARLQRAEEELQKLNQKCLELKAFLEKENAD) forms a coiled coil.

The polypeptide is MATH domain and coiled-coil domain-containing protein At3g58370 (Arabidopsis thaliana (Mouse-ear cress)).